Consider the following 415-residue polypeptide: Gamma-glutamyl phosphate reductase (415 aa).

It belongs to the gamma-glutamyl phosphate reductase family.

It is found in the cytoplasm. The enzyme catalyses L-glutamate 5-semialdehyde + phosphate + NADP(+) = L-glutamyl 5-phosphate + NADPH + H(+). Its pathway is amino-acid biosynthesis; L-proline biosynthesis; L-glutamate 5-semialdehyde from L-glutamate: step 2/2. Catalyzes the NADPH-dependent reduction of L-glutamate 5-phosphate into L-glutamate 5-semialdehyde and phosphate. The product spontaneously undergoes cyclization to form 1-pyrroline-5-carboxylate. The chain is Gamma-glutamyl phosphate reductase from Dictyoglomus thermophilum (strain ATCC 35947 / DSM 3960 / H-6-12).